Consider the following 564-residue polypeptide: 5-aminolevulinate synthase, mitochondrial (564 aa).

A mitochondrion-targeting transit peptide spans 1-57; sequence MESITKVSMSVCPFVRSTSTQALRQLSQTSGALANQARQCPIAGNAIRAKEISIRSY. Residues R113, S226, and K245 each coordinate substrate. Pyridoxal 5'-phosphate is bound by residues S278, H306, and T350. Residue K353 is part of the active site. An N6-(pyridoxal phosphate)lysine modification is found at K353. Pyridoxal 5'-phosphate contacts are provided by T382 and T383. Substrate is bound at residue T468.

The protein belongs to the class-II pyridoxal-phosphate-dependent aminotransferase family. As to quaternary structure, homodimer. The cofactor is pyridoxal 5'-phosphate.

The protein localises to the mitochondrion matrix. The enzyme catalyses succinyl-CoA + glycine + H(+) = 5-aminolevulinate + CO2 + CoA. The protein operates within porphyrin-containing compound metabolism; protoporphyrin-IX biosynthesis; 5-aminolevulinate from glycine: step 1/1. In terms of biological role, catalyzes the synthesis of 5-aminolevulinate (ALA) from succinyl-CoA and glycine, the first and rate-limiting step in heme biosynthesis. This is 5-aminolevulinate synthase, mitochondrial (HEM1) from Candida albicans (strain SC5314 / ATCC MYA-2876) (Yeast).